The primary structure comprises 423 residues: Probable peptidoglycan glycosyltransferase FtsW (423 aa).

Topologically, residues 1–53 are cytoplasmic; the sequence is MNLKEKLFPENRLGLNRFWNFSRGGIDNFRTGLRDAVSGVEQTRSRMMEYDQL. The helical transmembrane segment at 54–74 threads the bilayer; sequence LVWAILSLMLIGLVMVYSASI. Over 75–88 the chain is Periplasmic; that stretch reads TLADGPKYANYSSN. Residues 89–109 form a helical membrane-spanning segment; it reads FFLIRHMISLAIAIGVGIWAF. Residues 110–119 lie on the Cytoplasmic side of the membrane; sequence KIPTKVWDRY. A helical membrane pass occupies residues 120–140; the sequence is SPVIFGITVLLLIAVLIPGVG. The Periplasmic segment spans residues 141–149; the sequence is RGVNGAKRW. A helical transmembrane segment spans residues 150 to 170; it reads IPLGLMNFQSSELMKFAAVIF. The Cytoplasmic segment spans residues 171–184; it reads AASYTVQRQEYLHS. The chain crosses the membrane as a helical span at residues 185–205; it reads FVKGMLPMGIAVALVGGLLMA. Residues 206–208 are Periplasmic-facing; that stretch reads EPD. Residues 209–229 form a helical membrane-spanning segment; sequence MGAFVVVALIAFGILFLGGIN. The Cytoplasmic portion of the chain corresponds to 230–231; sequence AK. A helical membrane pass occupies residues 232-252; the sequence is LFGGLIAVGLMSGATMIAFSP. At 253–310 the chain is on the periplasmic side; sequence LRRGRMLAFMDPWQVDNAANKGYQLTHSLMAFGRGEWFGTGLGGSVEKLHYLPEAHTD. The helical transmembrane segment at 311–331 threads the bilayer; that stretch reads FIMAVIGEELGFVGVVVMIFL. Topologically, residues 332–359 are cytoplasmic; sequence FYWIVRRAFLIGRTALQLDRSFAGLAAK. Residues 360–380 form a helical membrane-spanning segment; sequence GVAIWIGWQAFINMGVNLGLL. Residues 381–386 are Periplasmic-facing; sequence PTKGLT. The chain crosses the membrane as a helical span at residues 387-407; that stretch reads LPLVSYGGSGILMNAVAMAML. At 408 to 423 the chain is on the cytoplasmic side; it reads LRIDFENRILMRGGKL.

This sequence belongs to the SEDS family. FtsW subfamily.

It is found in the cell inner membrane. The catalysed reaction is [GlcNAc-(1-&gt;4)-Mur2Ac(oyl-L-Ala-gamma-D-Glu-L-Lys-D-Ala-D-Ala)](n)-di-trans,octa-cis-undecaprenyl diphosphate + beta-D-GlcNAc-(1-&gt;4)-Mur2Ac(oyl-L-Ala-gamma-D-Glu-L-Lys-D-Ala-D-Ala)-di-trans,octa-cis-undecaprenyl diphosphate = [GlcNAc-(1-&gt;4)-Mur2Ac(oyl-L-Ala-gamma-D-Glu-L-Lys-D-Ala-D-Ala)](n+1)-di-trans,octa-cis-undecaprenyl diphosphate + di-trans,octa-cis-undecaprenyl diphosphate + H(+). The protein operates within cell wall biogenesis; peptidoglycan biosynthesis. In terms of biological role, peptidoglycan polymerase that is essential for cell division. This chain is Probable peptidoglycan glycosyltransferase FtsW, found in Polynucleobacter necessarius subsp. necessarius (strain STIR1).